The primary structure comprises 106 residues: Small ribosomal subunit protein bS16 (106 aa).

The protein belongs to the bacterial ribosomal protein bS16 family.

This is Small ribosomal subunit protein bS16 from Wolbachia sp. subsp. Brugia malayi (strain TRS).